A 718-amino-acid chain; its full sequence is Potassium channel KAT1 (718 aa).

The Cytoplasmic segment spans residues 1–60; it reads MTQAHSKSCFHQFWDGLQIKRSSDSFTVELLPSLGATINHSNKLQKFIISPYDPRYRSWE. The chain crosses the membrane as a helical span at residues 61–81; the sequence is LFLIVLVVYSAWICPFELAFL. Residues 82–88 lie on the Extracellular side of the membrane; the sequence is RDLPSKL. The chain crosses the membrane as a helical span at residues 89 to 109; the sequence is LLVENIVDIFFAIDIVLTFFV. Residues 110–132 are Cytoplasmic-facing; sequence AYVDSKTHLLVDDRKRIAMRYLS. A helical membrane pass occupies residues 133–153; that stretch reads TWFIFDVCSTAPFQPIILLFT. Topologically, residues 154–162 are extracellular; sequence HKGNDIAFK. A helical; Voltage-sensor transmembrane segment spans residues 163-183; the sequence is VLNLLRLWRLHRVSSLFARLE. Over 184–197 the chain is Cytoplasmic; the sequence is KDIRFNYFWTRCSK. A helical membrane pass occupies residues 198–218; that stretch reads LISVTLFAVHCAGCFNYMIAD. The Extracellular portion of the chain corresponds to 219 to 245; it reads RYPNPEKTWIGAVMSTFRSESLWTRYI. The segment at residues 246–265 is an intramembrane region (pore-forming); the sequence is TALYWSITTLTTTGYGDLHA. The Extracellular portion of the chain corresponds to 266–269; that stretch reads ENPT. Residues 270 to 290 traverse the membrane as a helical segment; that stretch reads EMLFDIVYMMFNLGLTAYLIG. Over 291 to 718 the chain is Cytoplasmic; the sequence is NMTNLVVHGT…DGDHLFLLEM (428 aa). 374–493 contributes to the a nucleoside 3',5'-cyclic phosphate binding site; that stretch reads LFNGVSGNFI…NILMNNLVQK (120 aa). The interval 560–584 is disordered; sequence EATRSSASENENSSMTDKEENHDEV. Positions 562 to 574 are enriched in polar residues; that stretch reads TRSSASENENSSM. The segment covering 575 to 584 has biased composition (basic and acidic residues); that stretch reads TDKEENHDEV. Residues 647–718 form the KHA domain; that stretch reads RVTIHKYRHN…DGDHLFLLEM (72 aa).

The protein belongs to the potassium channel family. Plant (TC 1.A.1.4) subfamily.

It localises to the membrane. Functionally, probable inward-rectifying potassium channel. Assuming opened or closed conformations in response to the voltage difference across the membrane, the channel is activated by hyperpolarization. This Oryza sativa subsp. japonica (Rice) protein is Potassium channel KAT1.